Consider the following 200-residue polypeptide: Pyridoxal 5'-phosphate synthase subunit PdxT (200 aa).

52–54 is a binding site for L-glutamine; sequence GES. Cysteine 84 functions as the Nucleophile in the catalytic mechanism. Residues arginine 116 and 145 to 146 each bind L-glutamine; that span reads IR. Residues histidine 181 and glutamate 183 each act as charge relay system in the active site.

It belongs to the glutaminase PdxT/SNO family. As to quaternary structure, in the presence of PdxS, forms a dodecamer of heterodimers. Only shows activity in the heterodimer.

It carries out the reaction aldehydo-D-ribose 5-phosphate + D-glyceraldehyde 3-phosphate + L-glutamine = pyridoxal 5'-phosphate + L-glutamate + phosphate + 3 H2O + H(+). The enzyme catalyses L-glutamine + H2O = L-glutamate + NH4(+). The protein operates within cofactor biosynthesis; pyridoxal 5'-phosphate biosynthesis. Functionally, catalyzes the hydrolysis of glutamine to glutamate and ammonia as part of the biosynthesis of pyridoxal 5'-phosphate. The resulting ammonia molecule is channeled to the active site of PdxS. The chain is Pyridoxal 5'-phosphate synthase subunit PdxT from Sulfolobus acidocaldarius (strain ATCC 33909 / DSM 639 / JCM 8929 / NBRC 15157 / NCIMB 11770).